Consider the following 336-residue polypeptide: UPF0065 protein in tcbD-tcbE intergenic region (336 aa).

Residues 1–32 form the signal peptide; it reads MHSSKCPDLANIGRRRVLAGIALAMTTSSTRA.

This sequence belongs to the UPF0065 (bug) family.

The protein resides in the periplasm. The polypeptide is UPF0065 protein in tcbD-tcbE intergenic region (Pseudomonas sp. (strain P51)).